The following is a 493-amino-acid chain: Trichothecene 8-O-acetyltransferase (493 aa).

Residues 180 to 191 (QDQNENEVQQPK) show a composition bias toward polar residues. The segment at 180–199 (QDQNENEVQQPKNLPDPDEP) is disordered.

The protein operates within sesquiterpene biosynthesis; trichothecene biosynthesis. In terms of biological role, trichothecene 8-O-acetyltransferase; part of 2-gene cluster involved in trichothecene C-8 modification that mediates the biosynthesis of T2-toxin. The biosynthesis of trichothecenes begins with the cyclization of farnesyl diphosphate to trichodiene and is catalyzed by the trichodiene synthase TRI5. Trichodiene undergoes a series of oxygenations catalyzed by the cytochrome P450 monooxygenase TRI4. TRI4 controls the addition of four oxygens at C-2, C-3, C-11, and the C-12, C-13-epoxide to form the intermediate isotrichotriol. Isotrichotriol then undergoes a non-enzymatic isomerization and cyclization to form isotrichodermol. During this process, the oxygen at the C-2 position becomes the pyran ring oxygen and the hydroxyl group at C-11 is lost. More complex type A trichothecenes are built by modifying isotrichodermol through a series of paired hydroxylation and acetylation or acylation steps. Isotrichodermol is converted to isotrichodermin by the acetyltransferase TRI101. TRI101 encodes a C-3 transacetylase that acts as a self-protection or resistance factor during biosynthesis and that the presence of a free C-3 hydroxyl group is a key component of Fusarium trichothecene phytotoxicity. A second hydroxyl group is added to C-15 by the trichothecene C-15 hydroxylase TRI11, producing 15-decalonectrin, which is then acetylated by TRI3, producing calonectrin. A third hydroxyl group is added at C-4 by the cytochrome P450 monooxygenase TRI13, converting calonectrin to 3,15-diacetoxyspirpenol, which is subsequently acetylated bythe acetyltransferase TRI7. A fourth hydroxyl group is added to C-8 by the cytochrome P450 monooxygenase TRI1, followed by the addition of an isovaleryl moiety by TRI16. Finally, the acetyl group is removed from the C-3 position by the trichothecene C-3 esterase TRI8 to produce T-2 toxin. In Fusarium sporotrichioides, this protein is Trichothecene 8-O-acetyltransferase.